A 147-amino-acid chain; its full sequence is UPF0306 protein KPK_0562 (147 aa).

It belongs to the UPF0306 family.

The chain is UPF0306 protein KPK_0562 from Klebsiella pneumoniae (strain 342).